The primary structure comprises 132 residues: Small ribosomal subunit protein eS6 (132 aa).

The protein belongs to the eukaryotic ribosomal protein eS6 family.

The polypeptide is Small ribosomal subunit protein eS6 (Methanoculleus marisnigri (strain ATCC 35101 / DSM 1498 / JR1)).